The chain runs to 665 residues: Ribonuclease R 2 (665 aa).

The 327-residue stretch at 202–528 folds into the RNB domain; sequence REDYRNEITY…LIIHRLLHLY (327 aa). Residues 579 to 662 form the S1 motif domain; that stretch reads GEVYTGTITG…RKGTVDFEQI (84 aa).

This sequence belongs to the RNR ribonuclease family. RNase R subfamily.

The protein resides in the cytoplasm. It carries out the reaction Exonucleolytic cleavage in the 3'- to 5'-direction to yield nucleoside 5'-phosphates.. 3'-5' exoribonuclease that releases 5'-nucleoside monophosphates and is involved in maturation of structured RNAs. In Lactococcus lactis subsp. lactis (strain IL1403) (Streptococcus lactis), this protein is Ribonuclease R 2.